The primary structure comprises 153 residues: Superoxide dismutase [Cu-Zn] (153 aa).

Residues H46, H48, and H63 each contribute to the Cu cation site. An intrachain disulfide couples C57 to C146. Zn(2+)-binding residues include H63, H71, H80, and D83. H120 contacts Cu cation.

It belongs to the Cu-Zn superoxide dismutase family. In terms of assembly, homodimer. Requires Cu cation as cofactor. Zn(2+) serves as cofactor.

The protein localises to the cytoplasm. The catalysed reaction is 2 superoxide + 2 H(+) = H2O2 + O2. Its function is as follows. Destroys radicals which are normally produced within the cells and which are toxic to biological systems. This chain is Superoxide dismutase [Cu-Zn] (SODCC), found in Solidago canadensis var. scabra (Tall goldenrod).